The primary structure comprises 96 residues: MSETITPDVHEVNPAARRTAVGARRPFYRRRKSCPFSGPNAPKIDYKDVRLLSRFLSERGKIVPSRITAVSAKKQRELAQAIKRARFLALLPYVVN.

Belongs to the bacterial ribosomal protein bS18 family. As to quaternary structure, part of the 30S ribosomal subunit. Forms a tight heterodimer with protein bS6.

In terms of biological role, binds as a heterodimer with protein bS6 to the central domain of the 16S rRNA, where it helps stabilize the platform of the 30S subunit. The chain is Small ribosomal subunit protein bS18 from Gluconobacter oxydans (strain 621H) (Gluconobacter suboxydans).